An 825-amino-acid polypeptide reads, in one-letter code: MAFESWPAGGVRPVEELDVRSFLMEENSTAERCYRSHSRSSVLQGLPFGGVPTVLAINVVLWLILLLIFSCLRKAAWDYGRLALLMKNDSLTSLFYGEQSEKEKTPSDSSPSDSETKDMGFCSWLTSLYHMKDEEIRSKCGIDAVTYLSFQRHIILLMMVVCLLSLTIILPVNLSGNLLGDNPENFGRTTVVNVPAQNIFLWLHSIFALLYFVITVLCMAHHSSRLEYREDEKVARTLMITSIPREISDPGLITKHLHEAYPSCTVTDIHFCFNVQKLMKLDSERRKAMKGRLYFTTKAQKNGRIMIKTHPCAQIFCCDICGFEKVDAEQYYSELEEKLTDEFNAEKNWISMKRLGIAFVTFRDERMTAVIVKDYSRARCRHKPQQSSITTVVRSHQWDVSYAPAPNDIIWENLSVCGPRWWLRCILLNILLFLLLFFLTTPAIIVNTMDKFNVTRPVESLRNPVITQFFPTLLLWAFSILLPFIVYYSSFFEYHWTRSGENQVTMHKCFLLLVFMVIILPSLGLSSLNLFFRWLFDVRFLDETDVKFQCVFLPDNGAFFVNYVITSSLIGTAMELLRIPALLVYSLRLCFAKSKAECIHVKISQAYEFQFGLEYAWTMCIFSVSMTYSITCPVIVPFGLLYLVLKHMVDRYNIYYAYTPTKLNQRIHAAAISQVVVAPILCMFWLLFFSVLRLGPVQPITLFTFITLLCSIAFSCFGFCMKKLRADRSTSYQMSDQTTEGGFSDAERSTISTTATANLFIASVLLEPELGLTPMPSPAHQSYGTMVNSQSSVRDAEEDEEKDLEETLETELKDDLLMDSPVAFQ.

Topologically, residues 1-50 (MAFESWPAGGVRPVEELDVRSFLMEENSTAERCYRSHSRSSVLQGLPFGG) are extracellular. A helical transmembrane segment spans residues 51-75 (VPTVLAINVVLWLILLLIFSCLRKA). Over 76-141 (AWDYGRLALL…KDEEIRSKCG (66 aa)) the chain is Cytoplasmic. Residues 98 to 117 (EQSEKEKTPSDSSPSDSETK) form a disordered region. Residues 142-174 (IDAVTYLSFQRHIILLMMVVCLLSLTIILPVNL) traverse the membrane as a helical segment. Over 175–198 (SGNLLGDNPENFGRTTVVNVPAQN) the chain is Extracellular. A helical membrane pass occupies residues 199 to 223 (IFLWLHSIFALLYFVITVLCMAHHS). At 224–418 (SRLEYREDEK…IIWENLSVCG (195 aa)) the chain is on the cytoplasmic side. Residues 419–448 (PRWWLRCILLNILLFLLLFFLTTPAIIVNT) traverse the membrane as a helical segment. The Extracellular segment spans residues 449–463 (MDKFNVTRPVESLRN). The chain crosses the membrane as a helical span at residues 464–493 (PVITQFFPTLLLWAFSILLPFIVYYSSFFE). Topologically, residues 494 to 497 (YHWT) are cytoplasmic. A helical transmembrane segment spans residues 498 to 534 (RSGENQVTMHKCFLLLVFMVIILPSLGLSSLNLFFRW). The Extracellular portion of the chain corresponds to 535–557 (LFDVRFLDETDVKFQCVFLPDNG). The helical transmembrane segment at 558 to 590 (AFFVNYVITSSLIGTAMELLRIPALLVYSLRLC) threads the bilayer. Residues 591 to 610 (FAKSKAECIHVKISQAYEFQ) lie on the Cytoplasmic side of the membrane. The helical transmembrane segment at 611-629 (FGLEYAWTMCIFSVSMTYS) threads the bilayer. The Extracellular portion of the chain corresponds to 630–632 (ITC). Residues 633–657 (PVIVPFGLLYLVLKHMVDRYNIYYA) form a helical membrane-spanning segment. The Cytoplasmic segment spans residues 658–664 (YTPTKLN). A helical membrane pass occupies residues 665-693 (QRIHAAAISQVVVAPILCMFWLLFFSVLR). Residues 694-698 (LGPVQ) lie on the Extracellular side of the membrane. A helical transmembrane segment spans residues 699-719 (PITLFTFITLLCSIAFSCFGF). Residues 720–825 (CMKKLRADRS…LLMDSPVAFQ (106 aa)) lie on the Cytoplasmic side of the membrane. Residues 777–825 (SPAHQSYGTMVNSQSSVRDAEEDEEKDLEETLETELKDDLLMDSPVAFQ) are disordered. Over residues 779-793 (AHQSYGTMVNSQSSV) the composition is skewed to polar residues. A compositionally biased stretch (acidic residues) spans 796–809 (AEEDEEKDLEETLE).

It belongs to the CSC1 (TC 1.A.17) family. Monomer.

The protein localises to the endoplasmic reticulum membrane. The protein resides in the cell membrane. It catalyses the reaction Ca(2+)(in) = Ca(2+)(out). Functionally, acts as an osmosensitive cation channel preferentially activated upon hypotonic stress. In contrast to tmem63b, does not show phospholipid scramblase activity. Required for the functional integrity of the kidney glomerular filtration barrier. The sequence is that of Osmosensitive cation channel TMEM63C (tmem63c) from Danio rerio (Zebrafish).